Here is a 122-residue protein sequence, read N- to C-terminus: MIQTETRLKVADNSGAREILTIKVLGGSGRKFANIGDVIVASVKQATPGGAVKKGDVVKAVIVRTKSGARRADGSYIKFDENAAVIIREDKTPRGTRIFGPVARELREGGFMKIVSLAPEVL.

The protein belongs to the universal ribosomal protein uL14 family. As to quaternary structure, part of the 50S ribosomal subunit. Forms a cluster with proteins L3 and L19. In the 70S ribosome, L14 and L19 interact and together make contacts with the 16S rRNA in bridges B5 and B8.

Its function is as follows. Binds to 23S rRNA. Forms part of two intersubunit bridges in the 70S ribosome. In Streptococcus pneumoniae (strain JJA), this protein is Large ribosomal subunit protein uL14.